The following is a 141-amino-acid chain: Hemoglobin subunit alpha (141 aa).

The region spanning 1–141 (VLSSDDKCNV…VSSVLTSKYR (141 aa)) is the Globin domain. An O2-binding site is contributed by His58. His87 is a binding site for heme b.

This sequence belongs to the globin family. Heterotetramer of two alpha chains and two beta chains. Red blood cells.

Involved in oxygen transport from the lung to the various peripheral tissues. Has antimicrobial activity against B.subtilis ATCC 6633. Has antioxidant activity. The sequence is that of Hemoglobin subunit alpha from Crocodylus siamensis (Siamese crocodile).